Reading from the N-terminus, the 163-residue chain is Aspartate carbamoyltransferase regulatory chain (163 aa).

Cysteine 113, cysteine 118, cysteine 143, and cysteine 146 together coordinate Zn(2+).

The protein belongs to the PyrI family. As to quaternary structure, contains catalytic and regulatory chains. It depends on Zn(2+) as a cofactor.

Involved in allosteric regulation of aspartate carbamoyltransferase. The chain is Aspartate carbamoyltransferase regulatory chain from Caldivirga maquilingensis (strain ATCC 700844 / DSM 13496 / JCM 10307 / IC-167).